The primary structure comprises 407 residues: RNA-binding motif, single-stranded-interacting protein 2 (407 aa).

Methionine 1 carries the N-acetylmethionine modification. The interval 29-54 is disordered; it reads QQMAPPSPSNSTPNSSSGSNGNDQLS. Over residues 37–50 the composition is skewed to low complexity; that stretch reads SNSTPNSSSGSNGN. 2 RRM domains span residues 56-129 and 135-220; these read TNLY…MAKQ and TNLY…FADG. At serine 106 the chain carries Phosphoserine. A Phosphothreonine modification is found at threonine 269. Phosphoserine is present on residues serine 280 and serine 285.

The protein localises to the nucleus. In Homo sapiens (Human), this protein is RNA-binding motif, single-stranded-interacting protein 2 (RBMS2).